We begin with the raw amino-acid sequence, 135 residues long: DNA-directed RNA polymerase subunit omega (135 aa).

Belongs to the RNA polymerase subunit omega family. The RNAP catalytic core consists of 2 alpha, 1 beta, 1 beta' and 1 omega subunit. When a sigma factor is associated with the core the holoenzyme is formed, which can initiate transcription.

It carries out the reaction RNA(n) + a ribonucleoside 5'-triphosphate = RNA(n+1) + diphosphate. In terms of biological role, promotes RNA polymerase assembly. Latches the N- and C-terminal regions of the beta' subunit thereby facilitating its interaction with the beta and alpha subunits. This chain is DNA-directed RNA polymerase subunit omega, found in Rhizobium meliloti (strain 1021) (Ensifer meliloti).